A 315-amino-acid polypeptide reads, in one-letter code: Putative serine/threonine-protein phosphatase PP2A-4 catalytic subunit (315 aa).

Aspartate 63, histidine 65, aspartate 91, and asparagine 123 together coordinate Mn(2+). Residue histidine 124 is the Proton donor of the active site. 2 residues coordinate Mn(2+): histidine 173 and histidine 247.

Belongs to the PPP phosphatase family. PP-2A subfamily. Mn(2+) serves as cofactor.

It localises to the cytoplasm. The enzyme catalyses O-phospho-L-seryl-[protein] + H2O = L-seryl-[protein] + phosphate. The catalysed reaction is O-phospho-L-threonyl-[protein] + H2O = L-threonyl-[protein] + phosphate. This chain is Putative serine/threonine-protein phosphatase PP2A-4 catalytic subunit (PP2A4), found in Oryza sativa subsp. indica (Rice).